The chain runs to 102 residues: Citrate lyase acyl carrier protein (102 aa).

At S14 the chain carries O-(phosphoribosyl dephospho-coenzyme A)serine.

The protein belongs to the CitD family. As to quaternary structure, oligomer with a subunit composition of (alpha,beta,gamma)6.

The protein localises to the cytoplasm. Its function is as follows. Covalent carrier of the coenzyme of citrate lyase. The chain is Citrate lyase acyl carrier protein from Streptococcus equi subsp. zooepidemicus (strain MGCS10565).